We begin with the raw amino-acid sequence, 253 residues long: MHGLDDAQYLQQKAHNKRISEFRSSSNSGINVTVVLKYTNGVVQVYNWQGTEVIAGSLNRQLMKFPNYMNPDKHGRIEWPGEGVEHQHGLIRSNGGNGSYDIGAGDPYAMQFIVQGSVDWNATRLRFFGPDGSRWMPDDQGGASVRAGLLNAAEDIINSKMQPLYFCDRMAGKSYYVRFDDKYAPRFPTIGFEVYRYRVGATNEMGGESARTAVASLISFPTFSTAYVNEKVAVENFFQPRELVYQNSYGYTV.

Major component of the virus occlusion bodies, which are large proteinaceous structures (polyhedra), that protect the virus from the outside environment for extended periods until they are ingested by insect larvae. This is Polyhedrin from Orgyia pseudotsugata cypovirus (OpCPV).